A 405-amino-acid polypeptide reads, in one-letter code: S-adenosylmethionine:tRNA ribosyltransferase-isomerase (405 aa).

It belongs to the QueA family. In terms of assembly, monomer.

The protein localises to the cytoplasm. It carries out the reaction 7-aminomethyl-7-carbaguanosine(34) in tRNA + S-adenosyl-L-methionine = epoxyqueuosine(34) in tRNA + adenine + L-methionine + 2 H(+). The protein operates within tRNA modification; tRNA-queuosine biosynthesis. Its function is as follows. Transfers and isomerizes the ribose moiety from AdoMet to the 7-aminomethyl group of 7-deazaguanine (preQ1-tRNA) to give epoxyqueuosine (oQ-tRNA). The chain is S-adenosylmethionine:tRNA ribosyltransferase-isomerase from Psychrobacter cryohalolentis (strain ATCC BAA-1226 / DSM 17306 / VKM B-2378 / K5).